A 362-amino-acid polypeptide reads, in one-letter code: Serine/threonine-protein kinase-like protein At3g51990 (362 aa).

A signal peptide spans 1–24 (MGYLSCKAGSAVAIAVSSAASTSG). Low complexity predominate over residues 21-32 (STSGSTSSKASA). The tract at residues 21 to 43 (STSGSTSSKASAPPESPIEDRPR) is disordered. The region spanning 59-329 (FDINNLLGRG…PGMEEVVGWL (271 aa)) is the Protein kinase domain. ATP contacts are provided by residues 65 to 73 (LGRGSHGSV) and lysine 86. A glycan (N-linked (GlcNAc...) asparagine) is linked at asparagine 136. The active-site Proton acceptor is aspartate 185. Serine 219 carries the post-translational modification Phosphoserine. Phosphothreonine is present on residues threonine 220 and threonine 225. Tyrosine 233 is subject to Phosphotyrosine.

Belongs to the protein kinase superfamily. Ser/Thr protein kinase family.

It localises to the secreted. The catalysed reaction is L-seryl-[protein] + ATP = O-phospho-L-seryl-[protein] + ADP + H(+). It catalyses the reaction L-threonyl-[protein] + ATP = O-phospho-L-threonyl-[protein] + ADP + H(+). This chain is Serine/threonine-protein kinase-like protein At3g51990, found in Arabidopsis thaliana (Mouse-ear cress).